Here is a 133-residue protein sequence, read N- to C-terminus: Small ribosomal subunit protein uS11 (133 aa).

Belongs to the universal ribosomal protein uS11 family. As to quaternary structure, part of the 30S ribosomal subunit.

Functionally, located on the platform of the 30S subunit. This Hyperthermus butylicus (strain DSM 5456 / JCM 9403 / PLM1-5) protein is Small ribosomal subunit protein uS11.